Here is a 487-residue protein sequence, read N- to C-terminus: Chromosomal replication initiator protein DnaA (487 aa).

The domain I, interacts with DnaA modulators stretch occupies residues 1-92; sequence MTIKGGVVSQ…SELWTANDAT (92 aa). The segment at 92 to 144 is domain II; the sequence is TGRRLDLKSRLEFESVGGAGYEAKAEPIEIVLPVSSDVPALAPTNGSKPSPVQ. A domain III, AAA+ region region spans residues 145-367; that stretch reads GLQERFTFDT…GALNTLSARA (223 aa). Glycine 189, glycine 191, lysine 192, and threonine 193 together coordinate ATP. The segment at 368 to 487 is domain IV, binds dsDNA; it reads GEGVSRLTLE…LETITRKLRG (120 aa).

This sequence belongs to the DnaA family. Oligomerizes as a right-handed, spiral filament on DNA at oriC.

The protein localises to the cytoplasm. Plays an essential role in the initiation and regulation of chromosomal replication. ATP-DnaA binds to the origin of replication (oriC) to initiate formation of the DNA replication initiation complex once per cell cycle. Binds the DnaA box (a 9 base pair repeat at the origin) and separates the double-stranded (ds)DNA. Forms a right-handed helical filament on oriC DNA; dsDNA binds to the exterior of the filament while single-stranded (ss)DNA is stabiized in the filament's interior. The ATP-DnaA-oriC complex binds and stabilizes one strand of the AT-rich DNA unwinding element (DUE), permitting loading of DNA polymerase. After initiation quickly degrades to an ADP-DnaA complex that is not apt for DNA replication. Binds acidic phospholipids. The sequence is that of Chromosomal replication initiator protein DnaA from Caulobacter sp. (strain K31).